We begin with the raw amino-acid sequence, 155 residues long: NADPH-dependent 7-cyano-7-deazaguanine reductase (155 aa).

Cys53 serves as the catalytic Thioimide intermediate. Residue Asp60 is the Proton donor of the active site. Residues 75-77 and 94-95 each bind substrate; these read VES and HE.

It belongs to the GTP cyclohydrolase I family. QueF type 1 subfamily.

The protein localises to the cytoplasm. It carries out the reaction 7-aminomethyl-7-carbaguanine + 2 NADP(+) = 7-cyano-7-deazaguanine + 2 NADPH + 3 H(+). The protein operates within tRNA modification; tRNA-queuosine biosynthesis. Catalyzes the NADPH-dependent reduction of 7-cyano-7-deazaguanine (preQ0) to 7-aminomethyl-7-deazaguanine (preQ1). The sequence is that of NADPH-dependent 7-cyano-7-deazaguanine reductase from Brucella anthropi (strain ATCC 49188 / DSM 6882 / CCUG 24695 / JCM 21032 / LMG 3331 / NBRC 15819 / NCTC 12168 / Alc 37) (Ochrobactrum anthropi).